We begin with the raw amino-acid sequence, 271 residues long: Formamidopyrimidine-DNA glycosylase (271 aa).

The Schiff-base intermediate with DNA role is filled by Pro-2. Glu-3 functions as the Proton donor in the catalytic mechanism. Lys-58 acts as the Proton donor; for beta-elimination activity in catalysis. Residues His-91, Arg-110, and Arg-152 each coordinate DNA. An FPG-type zinc finger spans residues 237–271; it reads RVYGRTGLACMACETPVKQIVQGNRSTYYCPACQR. Arg-261 serves as the catalytic Proton donor; for delta-elimination activity.

This sequence belongs to the FPG family. In terms of assembly, monomer. Zn(2+) serves as cofactor.

It catalyses the reaction Hydrolysis of DNA containing ring-opened 7-methylguanine residues, releasing 2,6-diamino-4-hydroxy-5-(N-methyl)formamidopyrimidine.. The enzyme catalyses 2'-deoxyribonucleotide-(2'-deoxyribose 5'-phosphate)-2'-deoxyribonucleotide-DNA = a 3'-end 2'-deoxyribonucleotide-(2,3-dehydro-2,3-deoxyribose 5'-phosphate)-DNA + a 5'-end 5'-phospho-2'-deoxyribonucleoside-DNA + H(+). Involved in base excision repair of DNA damaged by oxidation or by mutagenic agents. Acts as a DNA glycosylase that recognizes and removes damaged bases. Has a preference for oxidized purines, such as 7,8-dihydro-8-oxoguanine (8-oxoG). Has AP (apurinic/apyrimidinic) lyase activity and introduces nicks in the DNA strand. Cleaves the DNA backbone by beta-delta elimination to generate a single-strand break at the site of the removed base with both 3'- and 5'-phosphates. This chain is Formamidopyrimidine-DNA glycosylase, found in Thioalkalivibrio sulfidiphilus (strain HL-EbGR7).